The chain runs to 73 residues: Toxin Td4 (73 aa).

A signal peptide spans 1-7 (IGMVVEC). The LCN-type CS-alpha/beta domain maps to 8–70 (KDGYLVGNDG…TWDRATNRCG (63 aa)). Cystine bridges form between cysteine 18–cysteine 69, cysteine 22–cysteine 44, cysteine 30–cysteine 50, and cysteine 34–cysteine 52. At arginine 71 the chain carries Arginine amide.

It belongs to the long (4 C-C) scorpion toxin superfamily. Sodium channel inhibitor family. Beta subfamily. Expressed by the venom gland.

The protein localises to the secreted. Beta toxins bind voltage-independently at site-4 of sodium channels (Nav) and shift the voltage of activation toward more negative potentials thereby affecting sodium channel activation and promoting spontaneous and repetitive firing. The chain is Toxin Td4 from Tityus discrepans (Venezuelan scorpion).